We begin with the raw amino-acid sequence, 441 residues long: Apolipoprotein N-acyltransferase (441 aa).

7 helical membrane passes run I23–L43, F45–L65, Y75–I95, F97–L117, G133–F153, Y156–I176, and E178–F198. Residues I215–K441 enclose the CN hydrolase domain. The active-site Proton acceptor is the E256. Residue K310 is part of the active site. C359 (nucleophile) is an active-site residue.

The protein belongs to the CN hydrolase family. Apolipoprotein N-acyltransferase subfamily.

The protein localises to the cell inner membrane. It catalyses the reaction N-terminal S-1,2-diacyl-sn-glyceryl-L-cysteinyl-[lipoprotein] + a glycerophospholipid = N-acyl-S-1,2-diacyl-sn-glyceryl-L-cysteinyl-[lipoprotein] + a 2-acyl-sn-glycero-3-phospholipid + H(+). It functions in the pathway protein modification; lipoprotein biosynthesis (N-acyl transfer). In terms of biological role, catalyzes the phospholipid dependent N-acylation of the N-terminal cysteine of apolipoprotein, the last step in lipoprotein maturation. In Campylobacter jejuni subsp. jejuni serotype O:2 (strain ATCC 700819 / NCTC 11168), this protein is Apolipoprotein N-acyltransferase.